Consider the following 491-residue polypeptide: Protein nucleotidyltransferase YdiU (491 aa).

8 residues coordinate ATP: Gly-92, Gly-94, Arg-95, Lys-115, Asp-127, Gly-128, Arg-178, and Arg-185. Residue Asp-254 is the Proton acceptor of the active site. Positions 255 and 264 each coordinate Mg(2+). Asp-264 provides a ligand contact to ATP.

It belongs to the SELO family. The cofactor is Mg(2+). Requires Mn(2+) as cofactor.

The catalysed reaction is L-seryl-[protein] + ATP = 3-O-(5'-adenylyl)-L-seryl-[protein] + diphosphate. It catalyses the reaction L-threonyl-[protein] + ATP = 3-O-(5'-adenylyl)-L-threonyl-[protein] + diphosphate. It carries out the reaction L-tyrosyl-[protein] + ATP = O-(5'-adenylyl)-L-tyrosyl-[protein] + diphosphate. The enzyme catalyses L-histidyl-[protein] + UTP = N(tele)-(5'-uridylyl)-L-histidyl-[protein] + diphosphate. The catalysed reaction is L-seryl-[protein] + UTP = O-(5'-uridylyl)-L-seryl-[protein] + diphosphate. It catalyses the reaction L-tyrosyl-[protein] + UTP = O-(5'-uridylyl)-L-tyrosyl-[protein] + diphosphate. Its function is as follows. Nucleotidyltransferase involved in the post-translational modification of proteins. It can catalyze the addition of adenosine monophosphate (AMP) or uridine monophosphate (UMP) to a protein, resulting in modifications known as AMPylation and UMPylation. The chain is Protein nucleotidyltransferase YdiU from Mycolicibacterium paratuberculosis (strain ATCC BAA-968 / K-10) (Mycobacterium paratuberculosis).